Consider the following 318-residue polypeptide: ADP-ribosyl cyclase/cyclic ADP-ribose hydrolase 2 (318 aa).

The first 32 residues, 1-32 (MAAQGCAASRLLQLLLQLLLLLLLLAAGGARA), serve as a signal peptide directing secretion. 3 cysteine pairs are disulfide-bonded: Cys51/Cys67, Cys83/Cys163, and Cys144/Cys157. Residues Asn66 and Asn95 are each glycosylated (N-linked (GlcNAc...) asparagine). Trp109 contacts NAD(+). Trp109 is a nicotinamide binding site. A glycan (N-linked (GlcNAc...) asparagine) is linked at Asn148. Position 172 (Trp172) interacts with NAD(+). A glycan (N-linked (GlcNAc...) asparagine) is linked at Asn192. Residue Glu210 coordinates NAD(+). 2 disulfides stabilise this stretch: Cys238–Cys259 and Cys271–Cys280. Ala293 is lipidated: GPI-anchor amidated alanine. Residues 294-318 (PSLYTEQRAGLIIPLFLVLASRTQL) constitute a propeptide, removed in mature form.

It belongs to the ADP-ribosyl cyclase family. In terms of assembly, homodimer. In terms of tissue distribution, expressed in various tissues including placenta, lung, liver and kidney.

Its subcellular location is the cell membrane. The enzyme catalyses NAD(+) + H2O = ADP-D-ribose + nicotinamide + H(+). The catalysed reaction is NAD(+) = cyclic ADP-beta-D-ribose + nicotinamide + H(+). It catalyses the reaction cyclic ADP-beta-D-ribose + H2O = ADP-D-ribose. Its activity is regulated as follows. ADP-ribosyl cyclase and cADPR hydrolase activities are both activated by Zn(2+) or Mn(2+), and inhibited by Cu(2+), while Mg(2+) and Ca(2+) do not have any significant influence. In terms of biological role, catalyzes both the synthesis of cyclic ADP-beta-D-ribose (cADPR) from NAD(+), and its hydrolysis to ADP-D-ribose (ADPR). Cyclic ADPR is known to serve as an endogenous second messenger that elicits calcium release from intracellular stores, and thus regulates the mobilization of intracellular calcium. May be involved in pre-B-cell growth. The polypeptide is ADP-ribosyl cyclase/cyclic ADP-ribose hydrolase 2 (BST1) (Homo sapiens (Human)).